The chain runs to 470 residues: Homogentisate 1,2-dioxygenase (470 aa).

The Fe cation site is built by H356, E362, and H392.

The protein belongs to the homogentisate dioxygenase family. Fe cation serves as cofactor.

It carries out the reaction homogentisate + O2 = 4-maleylacetoacetate + H(+). Its pathway is amino-acid degradation; L-phenylalanine degradation; acetoacetate and fumarate from L-phenylalanine: step 4/6. The chain is Homogentisate 1,2-dioxygenase (HGO) from Oryza sativa subsp. japonica (Rice).